Reading from the N-terminus, the 161-residue chain is RuBisCO chaperone RbcX (161 aa).

Disordered regions lie at residues 1-20 and 130-161; these read MQFMGTASRMASTQRAKPME and LGAEPSLPETEVSDRPSDSATPDDASNASHAD. Over residues 147 to 161 the composition is skewed to polar residues; it reads DSATPDDASNASHAD.

Belongs to the RbcX family. Homodimer. Interacts with the exposed C-terminal peptide of endogenous RbcL ('Lys-460-Asp-470') via its central cleft, as well as C-terminal peptides from other cyanobacterial RbcL. Contacts a second RbcL monomer via its peripheral polar surface.

Its subcellular location is the carboxysome. It is found in the cytoplasm. Its function is as follows. An RbcL-specific chaperone. The central cleft of the RbcX homodimer (RbcX2) binds the C-terminus of an RbcL monomer, stabilizing the C-terminus and probably preventing its reassociation with chaperonin GroEL-ES. At the same time the peripheral region of RbcX2 binds a second RbcL monomer, bridging the RbcL homodimers in the correct orientation. The RbcX2(2)-bound RbcL dimers then assemble into the RbcL8 core (RbcL8-(RbcX2)8). RbcS binding triggers the release of RbcX2. This chain is RuBisCO chaperone RbcX, found in Synechococcus sp. (strain ATCC 27144 / PCC 6301 / SAUG 1402/1) (Anacystis nidulans).